Reading from the N-terminus, the 77-residue chain is Serine protease inhibitor 2 (77 aa).

A signal peptide spans 1–17 (MMFTPLIVLTLLVLATA). Disulfide bonds link Cys21/Cys53, Cys30/Cys48, Cys33/Cys44, Cys37/Cys74, and Cys55/Cys68. The TIL domain maps to 21–74 (CGPNEQWSDCPKCELQCGESDKPCATICGEPKCYCSPDKYRRIPDGRCIRKIQC).

The protein localises to the secreted. Its function is as follows. Defends the organism against the host's proteinases. This Anisakis simplex (Herring worm) protein is Serine protease inhibitor 2.